Consider the following 236-residue polypeptide: Small ribosomal subunit protein uS2c (236 aa).

Belongs to the universal ribosomal protein uS2 family.

The protein localises to the plastid. It localises to the chloroplast. The protein is Small ribosomal subunit protein uS2c (rps2) of Phaseolus vulgaris (Kidney bean).